The sequence spans 470 residues: Sulfate adenylyltransferase subunit 1 (470 aa).

A tr-type G domain is found at 22 to 238 (KELLRFITCG…ETIKIDYAYT (217 aa)). The interval 31-38 (GSVDDGKS) is G1. Residue 31–38 (GSVDDGKS) participates in GTP binding. Residues 89–93 (GITID) are G2. The G3 stretch occupies residues 110 to 113 (DTPG). GTP-binding positions include 110 to 114 (DTPGH) and 165 to 168 (NKMD). The segment at 165-168 (NKMD) is G4. A G5 region spans residues 202-204 (SAL).

The protein belongs to the TRAFAC class translation factor GTPase superfamily. Classic translation factor GTPase family. CysN/NodQ subfamily. In terms of assembly, heterodimer composed of CysD, the smaller subunit, and CysN.

The enzyme catalyses sulfate + ATP + H(+) = adenosine 5'-phosphosulfate + diphosphate. The protein operates within sulfur metabolism; hydrogen sulfide biosynthesis; sulfite from sulfate: step 1/3. In terms of biological role, with CysD forms the ATP sulfurylase (ATPS) that catalyzes the adenylation of sulfate producing adenosine 5'-phosphosulfate (APS) and diphosphate, the first enzymatic step in sulfur assimilation pathway. APS synthesis involves the formation of a high-energy phosphoric-sulfuric acid anhydride bond driven by GTP hydrolysis by CysN coupled to ATP hydrolysis by CysD. The protein is Sulfate adenylyltransferase subunit 1 of Francisella tularensis subsp. tularensis (strain SCHU S4 / Schu 4).